The following is a 217-amino-acid chain: MOB kinase activator 3A (217 aa).

The Zn(2+) site is built by Cys-83, Cys-88, His-165, and His-170.

Belongs to the MOB1/phocein family.

Its function is as follows. May regulate the activity of kinases. This chain is MOB kinase activator 3A (MOB3A), found in Pongo abelii (Sumatran orangutan).